Reading from the N-terminus, the 351-residue chain is DNA polymerase IV (351 aa).

The UmuC domain occupies 4 to 185 (IIHVDMDCFY…LPLGKIPGVG (182 aa)). Mg(2+)-binding residues include aspartate 8 and aspartate 103. Residue glutamate 104 is part of the active site.

The protein belongs to the DNA polymerase type-Y family. In terms of assembly, monomer. The cofactor is Mg(2+).

The protein localises to the cytoplasm. The catalysed reaction is DNA(n) + a 2'-deoxyribonucleoside 5'-triphosphate = DNA(n+1) + diphosphate. In terms of biological role, poorly processive, error-prone DNA polymerase involved in untargeted mutagenesis. Copies undamaged DNA at stalled replication forks, which arise in vivo from mismatched or misaligned primer ends. These misaligned primers can be extended by PolIV. Exhibits no 3'-5' exonuclease (proofreading) activity. May be involved in translesional synthesis, in conjunction with the beta clamp from PolIII. In Citrobacter koseri (strain ATCC BAA-895 / CDC 4225-83 / SGSC4696), this protein is DNA polymerase IV.